Reading from the N-terminus, the 113-residue chain is Large ribosomal subunit protein uL22 (113 aa).

Belongs to the universal ribosomal protein uL22 family. As to quaternary structure, part of the 50S ribosomal subunit.

Its function is as follows. This protein binds specifically to 23S rRNA; its binding is stimulated by other ribosomal proteins, e.g. L4, L17, and L20. It is important during the early stages of 50S assembly. It makes multiple contacts with different domains of the 23S rRNA in the assembled 50S subunit and ribosome. In terms of biological role, the globular domain of the protein is located near the polypeptide exit tunnel on the outside of the subunit, while an extended beta-hairpin is found that lines the wall of the exit tunnel in the center of the 70S ribosome. The sequence is that of Large ribosomal subunit protein uL22 from Solibacter usitatus (strain Ellin6076).